The chain runs to 328 residues: 3-dehydroquinate synthase (328 aa).

Belongs to the archaeal-type DHQ synthase family.

The enzyme catalyses 2-amino-2,3,7-trideoxy-D-lyxo-hept-6-ulosonate + NAD(+) + H2O = 3-dehydroquinate + NH4(+) + NADH + H(+). Functionally, catalyzes the oxidative deamination and cyclization of 2-amino-3,7-dideoxy-D-threo-hept-6-ulosonic acid (ADH) to yield 3-dehydroquinate (DHQ), which is fed into the canonical shikimic pathway of aromatic amino acid biosynthesis. This is 3-dehydroquinate synthase from Methanoculleus marisnigri (strain ATCC 35101 / DSM 1498 / JR1).